A 331-amino-acid polypeptide reads, in one-letter code: DNA-directed RNA polymerase subunit alpha (331 aa).

Residues 1–225 (MLDIAMPKLE…QYSSIIADFN (225 aa)) are alpha N-terminal domain (alpha-NTD). Residues 243 to 331 (PSEIYDMPIE…AARLNDGSAE (89 aa)) are alpha C-terminal domain (alpha-CTD).

Belongs to the RNA polymerase alpha chain family. In terms of assembly, homodimer. The RNAP catalytic core consists of 2 alpha, 1 beta, 1 beta' and 1 omega subunit. When a sigma factor is associated with the core the holoenzyme is formed, which can initiate transcription.

It carries out the reaction RNA(n) + a ribonucleoside 5'-triphosphate = RNA(n+1) + diphosphate. Its function is as follows. DNA-dependent RNA polymerase catalyzes the transcription of DNA into RNA using the four ribonucleoside triphosphates as substrates. The chain is DNA-directed RNA polymerase subunit alpha from Herpetosiphon aurantiacus (strain ATCC 23779 / DSM 785 / 114-95).